A 354-amino-acid polypeptide reads, in one-letter code: Dihydroorotate dehydrogenase (quinone) (354 aa).

Residues 61 to 65 and Ala-85 contribute to the FMN site; that span reads AGYDK. Substrate is bound at residue Lys-65. Residue 110–114 participates in substrate binding; sequence NRFGF. FMN-binding residues include Asn-139 and Asn-170. Residue Asn-170 coordinates substrate. Residue Ser-173 is the Nucleophile of the active site. Asn-175 contributes to the substrate binding site. The FMN site is built by Lys-211 and Thr-239. Substrate is bound at residue 240-241; that stretch reads NT. FMN contacts are provided by residues Gly-261, Gly-290, and 311–312; that span reads YT.

It belongs to the dihydroorotate dehydrogenase family. Type 2 subfamily. In terms of assembly, monomer. The cofactor is FMN.

It is found in the cell membrane. The catalysed reaction is (S)-dihydroorotate + a quinone = orotate + a quinol. Its pathway is pyrimidine metabolism; UMP biosynthesis via de novo pathway; orotate from (S)-dihydroorotate (quinone route): step 1/1. Functionally, catalyzes the conversion of dihydroorotate to orotate with quinone as electron acceptor. The protein is Dihydroorotate dehydrogenase (quinone) of Cereibacter sphaeroides (strain KD131 / KCTC 12085) (Rhodobacter sphaeroides).